We begin with the raw amino-acid sequence, 249 residues long: ATP synthase subunit a (249 aa).

The next 6 membrane-spanning stretches (helical) occupy residues 30–50 (SLYM…GSAG), 84–104 (FFPL…IGVI), 114–134 (LIVT…YGLY), 143–163 (VFVP…IEVI), 193–213 (FVTS…LPLA), and 220–240 (ILEV…TCIY).

It belongs to the ATPase A chain family. F-type ATPases have 2 components, CF(1) - the catalytic core - and CF(0) - the membrane proton channel. CF(1) has five subunits: alpha(3), beta(3), gamma(1), delta(1), epsilon(1). CF(0) has three main subunits: a(1), b(2) and c(9-12). The alpha and beta chains form an alternating ring which encloses part of the gamma chain. CF(1) is attached to CF(0) by a central stalk formed by the gamma and epsilon chains, while a peripheral stalk is formed by the delta and b chains.

Its subcellular location is the cell inner membrane. Key component of the proton channel; it plays a direct role in the translocation of protons across the membrane. The protein is ATP synthase subunit a of Afipia carboxidovorans (strain ATCC 49405 / DSM 1227 / KCTC 32145 / OM5) (Oligotropha carboxidovorans).